Reading from the N-terminus, the 466-residue chain is Putative outer membrane protein NMB0088 (466 aa).

Residues 1 to 24 (MTPSALKKTVLLLGTAFAAASVHA) form the signal peptide.

It belongs to the OmpP1/FadL family.

It is found in the cell outer membrane. In Neisseria meningitidis serogroup B (strain ATCC BAA-335 / MC58), this protein is Putative outer membrane protein NMB0088.